Here is a 134-residue protein sequence, read N- to C-terminus: Transcription antitermination protein NusB (134 aa).

The protein belongs to the NusB family.

In terms of biological role, involved in transcription antitermination. Required for transcription of ribosomal RNA (rRNA) genes. Binds specifically to the boxA antiterminator sequence of the ribosomal RNA (rrn) operons. This chain is Transcription antitermination protein NusB, found in Shewanella sp. (strain W3-18-1).